The primary structure comprises 230 residues: Large ribosomal subunit protein uL1 (230 aa).

This sequence belongs to the universal ribosomal protein uL1 family. Part of the 50S ribosomal subunit.

Binds directly to 23S rRNA. The L1 stalk is quite mobile in the ribosome, and is involved in E site tRNA release. Its function is as follows. Protein L1 is also a translational repressor protein, it controls the translation of the L11 operon by binding to its mRNA. The protein is Large ribosomal subunit protein uL1 of Methylobacillus flagellatus (strain ATCC 51484 / DSM 6875 / VKM B-1610 / KT).